Consider the following 926-residue polypeptide: Alanine--tRNA ligase (926 aa).

4 residues coordinate Zn(2+): histidine 577, histidine 581, cysteine 680, and histidine 684.

This sequence belongs to the class-II aminoacyl-tRNA synthetase family. Zn(2+) is required as a cofactor.

It localises to the cytoplasm. The enzyme catalyses tRNA(Ala) + L-alanine + ATP = L-alanyl-tRNA(Ala) + AMP + diphosphate. Its function is as follows. Catalyzes the attachment of alanine to tRNA(Ala) in a two-step reaction: alanine is first activated by ATP to form Ala-AMP and then transferred to the acceptor end of tRNA(Ala). Also edits incorrectly charged Ser-tRNA(Ala) and Gly-tRNA(Ala) via its editing domain. In Methylacidiphilum infernorum (isolate V4) (Methylokorus infernorum (strain V4)), this protein is Alanine--tRNA ligase.